Consider the following 63-residue polypeptide: 2-hydroxymuconate tautomerase (63 aa).

P2 (proton acceptor; via imino nitrogen) is an active-site residue.

It belongs to the 4-oxalocrotonate tautomerase family. As to quaternary structure, homohexamer.

It catalyses the reaction (2Z,4E)-2-hydroxyhexa-2,4-dienedioate = (3E)-2-oxohex-3-enedioate. It functions in the pathway aromatic compound metabolism; salicylate degradation. In terms of biological role, catalyzes the ketonization of 2-hydroxymuconate stereoselectively to yield 2-oxo-3-hexenedioate. This chain is 2-hydroxymuconate tautomerase (aphI), found in Comamonas testosteroni (Pseudomonas testosteroni).